A 431-amino-acid polypeptide reads, in one-letter code: Histidinol dehydrogenase (431 aa).

NAD(+) is bound by residues tyrosine 127, glutamine 189, and asparagine 212. Positions 237, 259, and 262 each coordinate substrate. 2 residues coordinate Zn(2+): glutamine 259 and histidine 262. Catalysis depends on proton acceptor residues glutamate 326 and histidine 327. Substrate is bound by residues histidine 327, aspartate 360, glutamate 414, and histidine 419. Aspartate 360 is a Zn(2+) binding site. Residue histidine 419 participates in Zn(2+) binding.

This sequence belongs to the histidinol dehydrogenase family. It depends on Zn(2+) as a cofactor.

The enzyme catalyses L-histidinol + 2 NAD(+) + H2O = L-histidine + 2 NADH + 3 H(+). It functions in the pathway amino-acid biosynthesis; L-histidine biosynthesis; L-histidine from 5-phospho-alpha-D-ribose 1-diphosphate: step 9/9. Catalyzes the sequential NAD-dependent oxidations of L-histidinol to L-histidinaldehyde and then to L-histidine. The protein is Histidinol dehydrogenase of Xylella fastidiosa (strain Temecula1 / ATCC 700964).